Reading from the N-terminus, the 299-residue chain is Probable adenylate kinase 7, mitochondrial (299 aa).

Residues 1–25 constitute a mitochondrion transit peptide; that stretch reads MAGVLRLAGAARSPLARALAPAARR. 80–85 lines the ATP pocket; the sequence is GPQKHA. An NMP region spans residues 100 to 129; that stretch reads SMGTLVRQELSPASSLYKKIANSVNEGKLV. Residues Arg106, 127 to 129, 157 to 160, and Gln164 each bind AMP; these read KLV and GIPR. ATP-binding positions include Arg190 and 203-204; that span reads LF. The interval 193–237 is LID; sequence GGDICPHCGQLFDFSKTASSDRNPSLGSCTWPSQVQHAAVLGLED.

The protein belongs to the adenylate kinase family.

It localises to the mitochondrion. The catalysed reaction is AMP + ATP = 2 ADP. In terms of biological role, catalyzes the reversible transfer of the terminal phosphate group between ATP and AMP. Plays an important role in cellular energy homeostasis and in adenine nucleotide metabolism. The polypeptide is Probable adenylate kinase 7, mitochondrial (Oryza sativa subsp. japonica (Rice)).